Here is a 703-residue protein sequence, read N- to C-terminus: Elongation factor G (703 aa).

In terms of domain architecture, tr-type G spans 10 to 286 (NKVRNIGIMA…AVVKFLPSPL (277 aa)). Residues 19–26 (AHIDAGKT), 83–87 (DTPGH), and 137–140 (NKLD) contribute to the GTP site.

This sequence belongs to the TRAFAC class translation factor GTPase superfamily. Classic translation factor GTPase family. EF-G/EF-2 subfamily.

The protein resides in the cytoplasm. Functionally, catalyzes the GTP-dependent ribosomal translocation step during translation elongation. During this step, the ribosome changes from the pre-translocational (PRE) to the post-translocational (POST) state as the newly formed A-site-bound peptidyl-tRNA and P-site-bound deacylated tRNA move to the P and E sites, respectively. Catalyzes the coordinated movement of the two tRNA molecules, the mRNA and conformational changes in the ribosome. In Nocardioides sp. (strain ATCC BAA-499 / JS614), this protein is Elongation factor G.